A 69-amino-acid chain; its full sequence is DNA-directed RNA polymerase subunit omega (69 aa).

The protein belongs to the RNA polymerase subunit omega family. In terms of assembly, the RNAP catalytic core consists of 2 alpha, 1 beta, 1 beta' and 1 omega subunit. When a sigma factor is associated with the core the holoenzyme is formed, which can initiate transcription.

The catalysed reaction is RNA(n) + a ribonucleoside 5'-triphosphate = RNA(n+1) + diphosphate. Functionally, promotes RNA polymerase assembly. Latches the N- and C-terminal regions of the beta' subunit thereby facilitating its interaction with the beta and alpha subunits. This chain is DNA-directed RNA polymerase subunit omega, found in Exiguobacterium sp. (strain ATCC BAA-1283 / AT1b).